The chain runs to 416 residues: Serine hydroxymethyltransferase (416 aa).

Residues Leu118 and 122-124 (GHL) each bind (6S)-5,6,7,8-tetrahydrofolate. An N6-(pyridoxal phosphate)lysine modification is found at Lys226. 350–352 (SPF) provides a ligand contact to (6S)-5,6,7,8-tetrahydrofolate.

It belongs to the SHMT family. In terms of assembly, homodimer. Pyridoxal 5'-phosphate serves as cofactor.

It is found in the cytoplasm. It carries out the reaction (6R)-5,10-methylene-5,6,7,8-tetrahydrofolate + glycine + H2O = (6S)-5,6,7,8-tetrahydrofolate + L-serine. It participates in one-carbon metabolism; tetrahydrofolate interconversion. It functions in the pathway amino-acid biosynthesis; glycine biosynthesis; glycine from L-serine: step 1/1. Functionally, catalyzes the reversible interconversion of serine and glycine with tetrahydrofolate (THF) serving as the one-carbon carrier. This reaction serves as the major source of one-carbon groups required for the biosynthesis of purines, thymidylate, methionine, and other important biomolecules. Also exhibits THF-independent aldolase activity toward beta-hydroxyamino acids, producing glycine and aldehydes, via a retro-aldol mechanism. This Sulfurovum sp. (strain NBC37-1) protein is Serine hydroxymethyltransferase.